The sequence spans 104 residues: ATP-dependent Clp protease adapter protein ClpS (104 aa).

The disordered stretch occupies residues 1-20 (MSPDPHEDLGDVLTEPTQKT).

The protein belongs to the ClpS family. As to quaternary structure, binds to the N-terminal domain of the chaperone ClpA.

Involved in the modulation of the specificity of the ClpAP-mediated ATP-dependent protein degradation. The protein is ATP-dependent Clp protease adapter protein ClpS of Desulfatibacillum aliphaticivorans.